Reading from the N-terminus, the 71-residue chain is Calcium dodecin (71 aa).

A Ca(2+)-binding site is contributed by E18.

Belongs to the dodecin family. As to quaternary structure, homododecamer; 12 subunits assemble to form a hollow sphere with a diameter of about 75 Angstroms. Calcium ions are bound at the interface between three subunits.

Functionally, binds calcium ions. May play a role in sequestering additional small ligands. This Mycobacterium tuberculosis (strain ATCC 25618 / H37Rv) protein is Calcium dodecin (secE2).